The chain runs to 256 residues: Phosphoribosylaminoimidazole-succinocarboxamide synthase (256 aa).

Belongs to the SAICAR synthetase family.

It carries out the reaction 5-amino-1-(5-phospho-D-ribosyl)imidazole-4-carboxylate + L-aspartate + ATP = (2S)-2-[5-amino-1-(5-phospho-beta-D-ribosyl)imidazole-4-carboxamido]succinate + ADP + phosphate + 2 H(+). The protein operates within purine metabolism; IMP biosynthesis via de novo pathway; 5-amino-1-(5-phospho-D-ribosyl)imidazole-4-carboxamide from 5-amino-1-(5-phospho-D-ribosyl)imidazole-4-carboxylate: step 1/2. This Synechococcus sp. (strain JA-3-3Ab) (Cyanobacteria bacterium Yellowstone A-Prime) protein is Phosphoribosylaminoimidazole-succinocarboxamide synthase.